The primary structure comprises 383 residues: Acetylornithine deacetylase (383 aa).

His-80 is a Zn(2+) binding site. Residue Asp-82 is part of the active site. Asp-112 serves as a coordination point for Zn(2+). Glu-144 is a catalytic residue. 3 residues coordinate Zn(2+): Glu-145, Glu-169, and His-355.

It belongs to the peptidase M20A family. ArgE subfamily. As to quaternary structure, homodimer. The cofactor is Zn(2+). Co(2+) serves as cofactor. It depends on glutathione as a cofactor.

The protein resides in the cytoplasm. The enzyme catalyses N(2)-acetyl-L-ornithine + H2O = L-ornithine + acetate. It functions in the pathway amino-acid biosynthesis; L-arginine biosynthesis; L-ornithine from N(2)-acetyl-L-ornithine (linear): step 1/1. In terms of biological role, catalyzes the hydrolysis of the amide bond of N(2)-acetylated L-amino acids. Cleaves the acetyl group from N-acetyl-L-ornithine to form L-ornithine, an intermediate in L-arginine biosynthesis pathway, and a branchpoint in the synthesis of polyamines. This is Acetylornithine deacetylase from Klebsiella pneumoniae (strain 342).